Reading from the N-terminus, the 353-residue chain is Magnesium-chelatase subunit ChlI (353 aa).

45–52 provides a ligand contact to ATP; the sequence is GDRGTGKS.

The protein belongs to the Mg-chelatase subunits D/I family.

The protein resides in the plastid. It localises to the chloroplast. The catalysed reaction is protoporphyrin IX + Mg(2+) + ATP + H2O = Mg-protoporphyrin IX + ADP + phosphate + 3 H(+). It functions in the pathway porphyrin-containing compound metabolism; chlorophyll biosynthesis. In terms of biological role, involved in chlorophyll biosynthesis; introduces a magnesium ion into protoporphyrin IX to yield Mg-protoporphyrin IX. The sequence is that of Magnesium-chelatase subunit ChlI (chlI) from Trieres chinensis (Marine centric diatom).